Consider the following 390-residue polypeptide: 3-ketoacyl-CoA thiolase (390 aa).

Cysteine 95 functions as the Acyl-thioester intermediate in the catalytic mechanism. Active-site proton acceptor residues include histidine 346 and cysteine 376.

It belongs to the thiolase-like superfamily. Thiolase family. Heterotetramer of two alpha chains (FadB) and two beta chains (FadA).

The protein localises to the cytoplasm. It catalyses the reaction an acyl-CoA + acetyl-CoA = a 3-oxoacyl-CoA + CoA. It participates in lipid metabolism; fatty acid beta-oxidation. Catalyzes the final step of fatty acid oxidation in which acetyl-CoA is released and the CoA ester of a fatty acid two carbons shorter is formed. The sequence is that of 3-ketoacyl-CoA thiolase from Acinetobacter baylyi (strain ATCC 33305 / BD413 / ADP1).